Consider the following 1036-residue polypeptide: Exportin-T (1036 aa).

It belongs to the exportin family.

The protein resides in the nucleus. It is found in the cytoplasm. Functionally, tRNA nucleus export receptor which facilitates tRNA translocation across the nuclear pore complex. Involved in pre-tRNA splicing, probably by affecting the interaction of pre-tRNA with splicing endonuclease. The protein is Exportin-T (LOS1) of Phaeosphaeria nodorum (strain SN15 / ATCC MYA-4574 / FGSC 10173) (Glume blotch fungus).